A 352-amino-acid polypeptide reads, in one-letter code: Adenosine deaminase (352 aa).

Position 2 is an N-acetylalanine (Ala2). Zn(2+)-binding residues include His15 and His17. His17 and Asp19 together coordinate substrate. Lys54 bears the N6-acetyllysine mark. A substrate-binding site is contributed by Gly184. Zn(2+) is bound at residue His214. The Proton donor role is filled by Glu217. An N6-acetyllysine modification is found at Lys232. Asp295 lines the Zn(2+) pocket. Position 296 (Asp296) interacts with substrate.

It belongs to the metallo-dependent hydrolases superfamily. Adenosine and AMP deaminases family. In terms of assembly, interacts with DPP4 (via extracellular domain). Interacts with PLG (via Kringle 4 domain); the interaction stimulates PLG activation when in complex with DPP4. Zn(2+) is required as a cofactor. As to expression, detected in brain neurons in the median emninence (at protein level). Expressed in secondary deciduum (at protein level). Found in all tissues, occurs in large amounts in T-lymphocytes and, at the time of weaning, in gastrointestinal tissues.

It localises to the cell membrane. The protein resides in the cell junction. The protein localises to the cytoplasmic vesicle lumen. It is found in the cytoplasm. Its subcellular location is the lysosome. The catalysed reaction is adenosine + H2O + H(+) = inosine + NH4(+). The enzyme catalyses 2'-deoxyadenosine + H2O + H(+) = 2'-deoxyinosine + NH4(+). It carries out the reaction cordycepin + H2O + H(+) = 3'-deoxyinosine + NH4(+). Functionally, catalyzes the hydrolytic deamination of adenosine and 2-deoxyadenosine. Plays an important role in purine metabolism and in adenosine homeostasis. Modulates signaling by extracellular adenosine, and so contributes indirectly to cellular signaling events. Acts as a positive regulator of T-cell coactivation, by binding DPP4. Its interaction with DPP4 regulates lymphocyte-epithelial cell adhesion. Enhances dendritic cell immunogenicity by affecting dendritic cell costimulatory molecule expression and cytokines and chemokines secretion. Enhances CD4+ T-cell differentiation and proliferation. Acts as a positive modulator of adenosine receptors ADORA1 and ADORA2A, by enhancing their ligand affinity via conformational change. Stimulates plasminogen activation. Plays a role in male fertility. Plays a protective role in early postimplantation embryonic development. Also responsible for the deamination of cordycepin (3'-deoxyadenosine), a fungal natural product that shows antitumor, antibacterial, antifungal, antivirus, and immune regulation properties. This is Adenosine deaminase (Ada) from Mus musculus (Mouse).